The following is a 129-amino-acid chain: UPF0212 protein MM_2357 (129 aa).

It belongs to the UPF0212 family.

This chain is UPF0212 protein MM_2357, found in Methanosarcina mazei (strain ATCC BAA-159 / DSM 3647 / Goe1 / Go1 / JCM 11833 / OCM 88) (Methanosarcina frisia).